Reading from the N-terminus, the 257-residue chain is Adenosylcobinamide-GDP ribazoletransferase (257 aa).

Helical transmembrane passes span 30-50 (IVYFPLVGFVIGILSYLIGWI), 52-72 (MLLFEPFIASIIITLAGVLIT), 109-129 (SLLAIMFVLLLKVGFVYDIIS), 132-152 (SLWVIIFMPMIARLGVMLLTY), 175-195 (LITAIIYTLLIVALITKFIFL), 198-218 (NIVLIKVLGSIIVVFVFIILF), and 237-257 (GIELSELVYLIYIYLLIFMFF).

It belongs to the CobS family. Requires Mg(2+) as cofactor.

The protein localises to the cell membrane. The enzyme catalyses alpha-ribazole + adenosylcob(III)inamide-GDP = adenosylcob(III)alamin + GMP + H(+). It carries out the reaction alpha-ribazole 5'-phosphate + adenosylcob(III)inamide-GDP = adenosylcob(III)alamin 5'-phosphate + GMP + H(+). The protein operates within cofactor biosynthesis; adenosylcobalamin biosynthesis; adenosylcobalamin from cob(II)yrinate a,c-diamide: step 7/7. Functionally, joins adenosylcobinamide-GDP and alpha-ribazole to generate adenosylcobalamin (Ado-cobalamin). Also synthesizes adenosylcobalamin 5'-phosphate from adenosylcobinamide-GDP and alpha-ribazole 5'-phosphate. In Clostridioides difficile (strain 630) (Peptoclostridium difficile), this protein is Adenosylcobinamide-GDP ribazoletransferase.